Here is an 88-residue protein sequence, read N- to C-terminus: Centromere protein W (88 aa).

It belongs to the CENP-W/WIP1 family. In terms of assembly, heterodimer with CENPT; this dimer coassembles with CENPS-CENPX heterodimers at centromeres to form the tetrameric CENP-T-W-S-X complex, which is a subcomplex of the large constitutive centromere-associated network (CCAN, also known as the interphase centromere complex or ICEN). Interacts with NPM1. In terms of tissue distribution, highly expressed in ovary, liver, lung and pancreas and to a lower extent in breast and gastrointestinal tract cancers; such as those of the colon, rectum and stomach. Overexpressed in high grade breast invasive tumors. Expressed in many cancer cell types.

The protein resides in the nucleus. The protein localises to the chromosome. It localises to the centromere. It is found in the kinetochore. Its subcellular location is the nucleus matrix. The protein resides in the nucleolus. In terms of biological role, component of the CENPA-NAC (nucleosome-associated) complex, a complex that plays a central role in assembly of kinetochore proteins, mitotic progression and chromosome segregation. The CENPA-NAC complex recruits the CENPA-CAD (nucleosome distal) complex and may be involved in incorporation of newly synthesized CENPA into centromeres. Part of a nucleosome-associated complex that binds specifically to histone H3-containing nucleosomes at the centromere, as opposed to nucleosomes containing CENPA. Component of the heterotetrameric CENP-T-W-S-X complex that binds and supercoils DNA, and plays an important role in kinetochore assembly. CENPW has a fundamental role in kinetochore assembly and function. It is one of the inner kinetochore proteins, with most further proteins binding downstream. Required for normal chromosome organization and normal progress through mitosis. In Homo sapiens (Human), this protein is Centromere protein W (CENPW).